The primary structure comprises 192 residues: Protein GrpE (192 aa).

It belongs to the GrpE family. As to quaternary structure, homodimer.

It is found in the cytoplasm. Its function is as follows. Participates actively in the response to hyperosmotic and heat shock by preventing the aggregation of stress-denatured proteins, in association with DnaK and GrpE. It is the nucleotide exchange factor for DnaK and may function as a thermosensor. Unfolded proteins bind initially to DnaJ; upon interaction with the DnaJ-bound protein, DnaK hydrolyzes its bound ATP, resulting in the formation of a stable complex. GrpE releases ADP from DnaK; ATP binding to DnaK triggers the release of the substrate protein, thus completing the reaction cycle. Several rounds of ATP-dependent interactions between DnaJ, DnaK and GrpE are required for fully efficient folding. In Neisseria gonorrhoeae (strain NCCP11945), this protein is Protein GrpE.